The following is a 226-amino-acid chain: Putative N-acetylmannosamine-6-phosphate 2-epimerase 1 (226 aa).

This sequence belongs to the NanE family.

It catalyses the reaction an N-acyl-D-glucosamine 6-phosphate = an N-acyl-D-mannosamine 6-phosphate. It participates in amino-sugar metabolism; N-acetylneuraminate degradation; D-fructose 6-phosphate from N-acetylneuraminate: step 3/5. Its function is as follows. Converts N-acetylmannosamine-6-phosphate (ManNAc-6-P) to N-acetylglucosamine-6-phosphate (GlcNAc-6-P). In Salmonella typhimurium (strain LT2 / SGSC1412 / ATCC 700720), this protein is Putative N-acetylmannosamine-6-phosphate 2-epimerase 1 (nanE1).